Consider the following 270-residue polypeptide: 4-hydroxy-tetrahydrodipicolinate reductase (270 aa).

NAD(+) contacts are provided by residues 8 to 13 (GAAGRM) and Glu34. Residue Arg35 participates in NADP(+) binding. NAD(+) contacts are provided by residues 98–100 (GST) and 122–125 (SPNM). His155 acts as the Proton donor/acceptor in catalysis. His156 serves as a coordination point for (S)-2,3,4,5-tetrahydrodipicolinate. Lys159 functions as the Proton donor in the catalytic mechanism. Residue 165 to 166 (GT) coordinates (S)-2,3,4,5-tetrahydrodipicolinate.

The protein belongs to the DapB family.

It localises to the cytoplasm. It carries out the reaction (S)-2,3,4,5-tetrahydrodipicolinate + NAD(+) + H2O = (2S,4S)-4-hydroxy-2,3,4,5-tetrahydrodipicolinate + NADH + H(+). The enzyme catalyses (S)-2,3,4,5-tetrahydrodipicolinate + NADP(+) + H2O = (2S,4S)-4-hydroxy-2,3,4,5-tetrahydrodipicolinate + NADPH + H(+). It functions in the pathway amino-acid biosynthesis; L-lysine biosynthesis via DAP pathway; (S)-tetrahydrodipicolinate from L-aspartate: step 4/4. Its function is as follows. Catalyzes the conversion of 4-hydroxy-tetrahydrodipicolinate (HTPA) to tetrahydrodipicolinate. This Anaeromyxobacter dehalogenans (strain 2CP-C) protein is 4-hydroxy-tetrahydrodipicolinate reductase.